Reading from the N-terminus, the 274-residue chain is Ribosomal RNA small subunit methyltransferase A (274 aa).

Positions 15, 17, 42, 64, 89, and 108 each coordinate S-adenosyl-L-methionine.

Belongs to the class I-like SAM-binding methyltransferase superfamily. rRNA adenine N(6)-methyltransferase family. RsmA subfamily.

The protein resides in the cytoplasm. The catalysed reaction is adenosine(1518)/adenosine(1519) in 16S rRNA + 4 S-adenosyl-L-methionine = N(6)-dimethyladenosine(1518)/N(6)-dimethyladenosine(1519) in 16S rRNA + 4 S-adenosyl-L-homocysteine + 4 H(+). Its function is as follows. Specifically dimethylates two adjacent adenosines (A1518 and A1519) in the loop of a conserved hairpin near the 3'-end of 16S rRNA in the 30S particle. May play a critical role in biogenesis of 30S subunits. This Prochlorococcus marinus (strain MIT 9301) protein is Ribosomal RNA small subunit methyltransferase A.